Consider the following 378-residue polypeptide: tRNA-specific 2-thiouridylase MnmA (378 aa).

Residues 9-16 and Met-35 each bind ATP; that span reads GVSGGVDS. Residues 94 to 96 are interaction with target base in tRNA; the sequence is NPD. The Nucleophile role is filled by Cys-99. An intrachain disulfide couples Cys-99 to Cys-195. Residue Gly-123 participates in ATP binding. The segment at 145–147 is interaction with tRNA; sequence KDQ. The active-site Cysteine persulfide intermediate is Cys-195. An interaction with tRNA region spans residues 307–308; the sequence is RY.

The protein belongs to the MnmA/TRMU family.

Its subcellular location is the cytoplasm. The enzyme catalyses S-sulfanyl-L-cysteinyl-[protein] + uridine(34) in tRNA + AH2 + ATP = 2-thiouridine(34) in tRNA + L-cysteinyl-[protein] + A + AMP + diphosphate + H(+). Catalyzes the 2-thiolation of uridine at the wobble position (U34) of tRNA, leading to the formation of s(2)U34. This Xanthomonas euvesicatoria pv. vesicatoria (strain 85-10) (Xanthomonas campestris pv. vesicatoria) protein is tRNA-specific 2-thiouridylase MnmA.